The following is a 309-amino-acid chain: tRNA pseudouridine synthase B (309 aa).

Aspartate 39 (nucleophile) is an active-site residue.

The protein belongs to the pseudouridine synthase TruB family. Type 1 subfamily.

The catalysed reaction is uridine(55) in tRNA = pseudouridine(55) in tRNA. In terms of biological role, responsible for synthesis of pseudouridine from uracil-55 in the psi GC loop of transfer RNAs. The protein is tRNA pseudouridine synthase B of Bacillus licheniformis (strain ATCC 14580 / DSM 13 / JCM 2505 / CCUG 7422 / NBRC 12200 / NCIMB 9375 / NCTC 10341 / NRRL NRS-1264 / Gibson 46).